Reading from the N-terminus, the 169-residue chain is Photosystem I assembly protein Ycf3 (169 aa).

TPR repeat units follow at residues 35–68, 72–105, and 120–153; these read AFTY…ETDP, SYIL…NPSL, and GEQA…APGN.

Belongs to the Ycf3 family.

The protein localises to the plastid. The protein resides in the chloroplast thylakoid membrane. Functionally, essential for the assembly of the photosystem I (PSI) complex. May act as a chaperone-like factor to guide the assembly of the PSI subunits. In Pinus koraiensis (Korean pine), this protein is Photosystem I assembly protein Ycf3.